The chain runs to 145 residues: uncharacterized protein (145 aa).

This sequence belongs to the asfivirus K145R family.

Its subcellular location is the virion. This is an uncharacterized protein from Ornithodoros (relapsing fever ticks).